A 52-amino-acid chain; its full sequence is Large ribosomal subunit protein bL32c (52 aa).

This sequence belongs to the bacterial ribosomal protein bL32 family.

Its subcellular location is the plastid. The protein localises to the chloroplast. The chain is Large ribosomal subunit protein bL32c from Olimarabidopsis pumila (Dwarf rocket).